The chain runs to 71 residues: Large ribosomal subunit protein uL29 (71 aa).

This sequence belongs to the universal ribosomal protein uL29 family.

This is Large ribosomal subunit protein uL29 from Rickettsia typhi (strain ATCC VR-144 / Wilmington).